The chain runs to 256 residues: Dihydroorotate dehydrogenase B (NAD(+)), electron transfer subunit (256 aa).

An FAD-binding FR-type domain is found at Met-1–Val-101. FAD is bound by residues Arg-52–Ser-55, Ile-69–Arg-71, and Gly-76–Thr-77. The [2Fe-2S] cluster site is built by Cys-220, Cys-225, Cys-228, and Cys-243.

It belongs to the PyrK family. Heterotetramer of 2 PyrK and 2 PyrD type B subunits. [2Fe-2S] cluster serves as cofactor. It depends on FAD as a cofactor.

It participates in pyrimidine metabolism; UMP biosynthesis via de novo pathway; orotate from (S)-dihydroorotate (NAD(+) route): step 1/1. In terms of biological role, responsible for channeling the electrons from the oxidation of dihydroorotate from the FMN redox center in the PyrD type B subunit to the ultimate electron acceptor NAD(+). The sequence is that of Dihydroorotate dehydrogenase B (NAD(+)), electron transfer subunit from Bacillus velezensis (strain DSM 23117 / BGSC 10A6 / LMG 26770 / FZB42) (Bacillus amyloliquefaciens subsp. plantarum).